The sequence spans 649 residues: Solute carrier family 22 member 17 (649 aa).

Residues 1-70 (MAPRVATGTP…GGDGLGSSLS (70 aa)) are disordered. Polar residues predominate over residues 24–34 (VEITPTSNGQV). Positions 47-57 (QGEREREREGE) are enriched in basic and acidic residues. Residues asparagine 134 and asparagine 143 are each glycosylated (N-linked (GlcNAc...) asparagine). Helical transmembrane passes span 211–231 (VILE…FLGY), 240–260 (GIVL…AAAG), 265–285 (VMAL…GVYL), 300–320 (ALAG…LALV), 330–350 (MITA…FLES), 414–433 (NIWK…HAIR), 448–468 (FYLC…FLGV), 477–497 (GILL…LGLW), 526–546 (FSVL…LLAA), 557–577 (GLGL…AQRL), and 584–604 (FLQH…IMLL).

The protein belongs to the major facilitator (TC 2.A.1) superfamily. Organic cation transporter (TC 2.A.1.19) family. In terms of tissue distribution, expressed in brain.

The protein resides in the cell membrane. It localises to the vacuole membrane. In terms of biological role, cell surface receptor for LCN2 (24p3) that plays a key role in iron homeostasis and transport. Able to bind iron-bound LCN2 (holo-24p3), followed by internalization of holo-24p3 and release of iron, thereby increasing intracellular iron concentration and leading to inhibition of apoptosis. Also binds iron-free LCN2 (apo-24p3), followed by internalization of apo-24p3 and its association with an intracellular siderophore, leading to iron chelation and iron transfer to the extracellular medium, thereby reducing intracellular iron concentration and resulting in apoptosis. The polypeptide is Solute carrier family 22 member 17 (SLC22A17) (Homo sapiens (Human)).